Reading from the N-terminus, the 282-residue chain is Para-Rep C1 (282 aa).

Residues 1–99 form the CRESS-DNA virus Rep endonuclease domain; the sequence is MASKRWCFTL…ETLISEIGAP (99 aa). The short motif at 7–10 is the RCR-1 element; that stretch reads CFTL. A divalent metal cation is bound by residues E38 and H47. The short motif at 47–49 is the RCR-2 element; it reads HLQ. Residues 56-77 carry the Nuclear localization signal motif; sequence KMIRLGGLKKKFGYRAHWEIAK. The active-site For DNA cleavage activity is Y86. The RCR-3 motif lies at 86–89; that stretch reads YCTK. S94 is an a divalent metal cation binding site. 174–182 is a binding site for ATP; it reads GSDGGEGKS.

The protein belongs to the nanoviridea/circoviridae replication-associated protein family. Homooligomer (Potential). Rep binds to repeated DNA motifs (iterons). The cofactor is Mg(2+). Requires Mn(2+) as cofactor.

Its subcellular location is the host nucleus. It carries out the reaction ATP + H2O = ADP + phosphate + H(+). Functionally, initiates and terminates the replication only of its own subviral DNA molecule. The closed circular ssDNA genome is first converted to a superhelical dsDNA. Rep binds a specific hairpin at the genome origin of replication. Introduces an endonucleolytic nick within the intergenic region of the genome, thereby initiating the rolling circle replication (RCR). Following cleavage, binds covalently to the 5'-phosphate of DNA as a tyrosyl ester. The cleavage gives rise to a free 3'-OH that serves as a primer for the cellular DNA polymerase. The polymerase synthesizes the (+) strand DNA by rolling circle mechanism. After one round of replication, a Rep-catalyzed nucleotidyl transfer reaction releases a circular single-stranded virus genome, thereby terminating the replication. Displays origin-specific DNA cleavage, nucleotidyl transferase, ATPase and helicase activities. The polypeptide is Para-Rep C1 (C1) (Faba bean necrotic yellows C11 alphasatellite (FBNYC11A)).